The chain runs to 2177 residues: MKGLGVPAAALLWGGLSALLPPSLPADDVSPYFKTEPVRSQVHLEGNRLVLTCMAEGSWPLEFKWLHNSRELTKFSLEYRYMITSLDRTHAGFYRCIVRNRMGALLQRQTEVQVAYMGSFEDSETQQSVSHGEAAVIRAPRIASFPQPQVTWFRDGRKISPSSRIAITLENTLVILSTVAPDAGRYYVQAVNDKNGDNKTSQPITLTVANVGGPADPIAPTIIVPPRNTSVVAGTSEVTMECVANARPLIKLHIIWKKDGVPISSGISDYSRRLTILNPTLGDSGYYECEAVLRSSSVPAVAEGAYLSVLEPPQFVKEPERHITAEMEKVVAIPCQAKGVPPPDMAWYKDASLIHPEQLSRFQLLADGSLQISGLLPDDTGMFQCFARNAAGEVQTTTYLAVTSIAPNITRGPQDSTVIDGMSVILNCETSGAPRPAITWQKGERILASGSVQLPRFTLLESGSLLVSPAHLTDAGTYTCLATNSRGVDEASADLVVWARTRITDPPQDQSVIKGTKASMSCGVTHDPSVDVRYIWEKDGAPLGTESGPRLRLDETGTLHISQTWSGDIGTYTCKVLSAGGNDSRSAHLRVRQLPHAPESPVAVLSPLEKRAINLTWAKPFDGNSPLLRYLVEISENNAPWTVLLASVDPELTWVVVRGLVPARSYQFRLCAVNDVGRSQFSKDTERVSLPEEPPFAPPQNVIASGRTNQSIMIQWQPPPESHQNGVLKGYIIRYCLAGLPVGYQFKNITNADVNNLLLEDLIIWTNYEIEVAAYNSAGLGVYSMKVTEWTLQGVPTVPPGNVQTEATNSTTIRFTWNPPSPQFINGINQGYKLIAWEPEHEEEATVVTVRPNFQDSVHVGYVVGLKKFTEYLTSVLCFTTPGDGPRSPPQLVRTHEDVPGPVGHLSFSEILDTSLKVSWQEPLEKNGILTGYRISWEEYNRTNTRVTHYLPNVTLEYRVTGLTALTTYTIEVAAMTSKGQGQVSSSTISSGVPPELPGAPTNLGISNIGPRSVTLQFRPGYDGKTSISRWQVEAQVGQNGEAEEWGLVHQLANEPDARSLEVPNLNPYTYYSFRMRQVNIVGTSPPSLPSRRIQTLQAPPDVAPANVTLRTASETSLWLRWMPLLEQEYNGNPDSVGYRIRYLRSDGQGRAVVHVIHDRVEREYTIEDLEEWTEYRVQVQAFNAIGSGPWSHLVLGRTRESVPSSGPSNVSAQATSSSNMLVRWSDIPEADCNGLILGYKVMFKEKDSEARAQFWLAEGNTSRSAQLTGLGKFMLYEIRVLAFTRIGDGVPSRPPILERTLDDVPGPPVGMLFPEVRTTSVRLIWQPPTAPNGIILAYQLTHRLNTTTANAAVSEVLGPSTRQYTATGLQPEATYLFSITAQTRKGWGEAAEALVVTTEKRDRPQPPSKPLVRQEDVRARSVLLSWEPGSDGLSPVRFYTVQTRELPSGEWALHPASISHNATAFVVDRLKPFTSYKFRVKATNDIGDSEYSEESESLTTLQAAPEEAPTILSVTPHTTTSVLIRWQPPSEDKINGILLGFRLRYRELLYDSLRGFTLHGIGNPGATWAELTPVYAVHNLSEVSLTQYELDNLSKHRRYEIRMSVYNAVGEGPPSPPQEVFVGEAMPTGAPQNVAVKAATATQLDVTWEPPPTESQNGDIQGYKIHFWEAQRQNESARVKTLFLPETGVKLKNLTGYTSYWVSIAAFNAAGDGPRSTPVTARTQQAAPSAPGSIRFSELTTTSVNVSWEPPPLPNGILEGYRLVYEPCMPVDGVSKIVTVDVKGNSPLWMKVKDLAEGITYRFRIRAKTFAYGPDVEANITTGPGEGAPGPPGEPFISRYGSAITIHWTSGDPGQGPITRYVIEARPSDEGLWDILIKDIPKEVTSYTFSMDILKQGVSYDFRVIAVNDYGYGTPSTPSPSVSAQKANPFYEEWWFLVVIALVGLIFILLLVFVLIIRGQSKKYAKKSDSGNGSKANALTHGEMVSLDESSFPALELNNRRLSVKNSFCRKNGIYTRSPPRPSPGSLHYSDEDVTKYNDLIPAESSSLTEKPSEVSDSQGSDSEYEVDPAHQKAHSFVNHYISDPTYYNSWRRQQKGISRAQAYSYTESDSGEPDHTPLSNSTSTQQGSLFRPKASRIPTPQTPGNPPSQPGTLYRPPSSLAPGSRAPIGGFSSFV.

The first 26 residues, 1–26 (MKGLGVPAAALLWGGLSALLPPSLPA), serve as a signal peptide directing secretion. The Extracellular segment spans residues 27–1937 (DDVSPYFKTE…ANPFYEEWWF (1911 aa)). Ig-like C2-type domains are found at residues 31-113 (PYFK…TEVQ), 118-205 (GSFE…QPIT), 220-299 (PTII…SSVP), 313-401 (PQFV…TYLA), 407-496 (PNIT…ADLV), and 501-590 (TRIT…AHLR). Residues C53 and C96 are joined by a disulfide bond. 2 N-linked (GlcNAc...) asparagine glycosylation sites follow: N198 and N228. 2 disulfide bridges follow: C242–C289 and C335–C385. An N-linked (GlcNAc...) asparagine glycan is attached at N408. Cystine bridges form between C428–C480 and C522–C574. 7 N-linked (GlcNAc...) asparagine glycosylation sites follow: N582, N614, N709, N748, N809, N941, and N953. Fibronectin type-III domains follow at residues 597 to 693 (APES…LPEE), 698 to 794 (PPQN…TLQG), 799 to 898 (PPGN…THED), 902 to 996 (PVGH…VPPE), 1000 to 1099 (APTN…TLQA), 1104 to 1202 (APAN…TRES), 1207 to 1304 (GPSN…TLDD), 1305 to 1402 (VPGP…TEKR), 1407 to 1504 (PPSK…TLQA), 1509 to 1626 (APTI…VGEA), 1631 to 1727 (APQN…TQQA), 1731 to 1826 (APGS…TGPG), and 1829 to 1928 (APGP…AQKA). N1107, N1210, N1261, N1346, N1462, N1580, N1593, N1675, N1694, N1746, and N1820 each carry an N-linked (GlcNAc...) asparagine glycan. Residues 1938 to 1958 (LVVIALVGLIFILLLVFVLII) traverse the membrane as a helical segment. Over 1959–2177 (RGQSKKYAKK…APIGGFSSFV (219 aa)) the chain is Cytoplasmic. Disordered regions lie at residues 2044-2071 (AESSSLTEKPSEVSDSQGSDSEYEVDPA) and 2103-2177 (QAYS…SSFV). 2 stretches are compositionally biased toward polar residues: residues 2045-2063 (ESSSLTEKPSEVSDSQGSD) and 2119-2130 (PLSNSTSTQQGS). A compositionally biased stretch (pro residues) spans 2142–2151 (PQTPGNPPSQ). The short motif at 2171–2177 (GGFSSFV) is the PDZ-binding element.

The protein belongs to the sidekick family. As to quaternary structure, homodimer; mediates homophilic interactions to promote cell adhesion. Expressed by non-overlapping subsets of retinal neurons. SDK1, SDK2, DSCAM and DSCAML1 are expressed in non-overlapping subsets of interneurons and retinal ganglion cells (RGCs) that form synapses in distinct inner plexiform layer (IPL) sublaminae.

The protein resides in the cell membrane. The protein localises to the synapse. Adhesion molecule that promotes lamina-specific synaptic connections in the retina. Expressed in specific subsets of interneurons and retinal ganglion cells (RGCs) and promotes synaptic connectivity via homophilic interactions. The sequence is that of Protein sidekick-2 from Gallus gallus (Chicken).